A 184-amino-acid polypeptide reads, in one-letter code: Large ribosomal subunit protein uL5 (184 aa).

This sequence belongs to the universal ribosomal protein uL5 family. Component of the large ribosomal subunit. Interacts with Fmr1 to form the RNA-induced silencing complex (RISC), a ribonucleoprotein (RNP) complex involved in translation regulation, other components of the complex are RpL5, Rm62, AGO2 and Dcr-1.

The protein resides in the nucleus. It is found in the cytoplasm. Component of the ribosome, a large ribonucleoprotein complex responsible for the synthesis of proteins in the cell. The small ribosomal subunit (SSU) binds messenger RNAs (mRNAs) and translates the encoded message by selecting cognate aminoacyl-transfer RNA (tRNA) molecules. The large subunit (LSU) contains the ribosomal catalytic site termed the peptidyl transferase center (PTC), which catalyzes the formation of peptide bonds, thereby polymerizing the amino acids delivered by tRNAs into a polypeptide chain. The nascent polypeptides leave the ribosome through a tunnel in the LSU and interact with protein factors that function in enzymatic processing, targeting, and the membrane insertion of nascent chains at the exit of the ribosomal tunnel. This chain is Large ribosomal subunit protein uL5 (RpL11), found in Drosophila melanogaster (Fruit fly).